The primary structure comprises 141 residues: Lysozyme 1 (141 aa).

The N-terminal stretch at 1–19 (MKFFIVLVAALALAAPAMG) is a signal peptide. The region spanning 20–141 (KTFTRCSLAR…GSLPSINDCF (122 aa)) is the C-type lysozyme domain. Intrachain disulfides connect Cys25–Cys140, Cys46–Cys130, Cys81–Cys97, and Cys93–Cys111. Glu51 is a catalytic residue. A glycan (N-linked (GlcNAc...) asparagine) is linked at Asn65. Asp69 is an active-site residue. N-linked (GlcNAc...) asparagine glycosylation is present at Asn104.

It belongs to the glycosyl hydrolase 22 family.

It carries out the reaction Hydrolysis of (1-&gt;4)-beta-linkages between N-acetylmuramic acid and N-acetyl-D-glucosamine residues in a peptidoglycan and between N-acetyl-D-glucosamine residues in chitodextrins.. Functionally, may not function as a self-defense protein, but as a digestive enzyme, probably in the gut of the insect body. Inactive towards Micrococcus luteus. Active toward glycol chitin. This chain is Lysozyme 1, found in Musca domestica (House fly).